The following is a 108-amino-acid chain: UPF0102 protein Tpet_0671 (108 aa).

The protein belongs to the UPF0102 family.

The chain is UPF0102 protein Tpet_0671 from Thermotoga petrophila (strain ATCC BAA-488 / DSM 13995 / JCM 10881 / RKU-1).